Here is a 308-residue protein sequence, read N- to C-terminus: HTH-type transcriptional regulator SsuR (308 aa).

An HTH lysR-type domain is found at 1–59 (MNFQQLRFVREAVRQNMNLTEVANVLYTSQSGVSKQIKDLEDELGVDIFIRRGKRLTGL). A DNA-binding region (H-T-H motif) is located at residues 19–38 (LTEVANVLYTSQSGVSKQIK).

The protein belongs to the LysR transcriptional regulatory family.

Functionally, transcriptional regulator that is essential for the utilization of a number of organic sulfur sources of either environmental or human origin. Required for aliphatic sulfonate utilization. Binds to DNA at target promoter regions. Targets include the ssuDBC operon, the tauABC operon, three tauD-type genes and atsA. This is HTH-type transcriptional regulator SsuR from Burkholderia cenocepacia (strain ATCC BAA-245 / DSM 16553 / LMG 16656 / NCTC 13227 / J2315 / CF5610) (Burkholderia cepacia (strain J2315)).